We begin with the raw amino-acid sequence, 401 residues long: Nicotinate phosphoribosyltransferase (401 aa).

Histidine 224 is modified (phosphohistidine; by autocatalysis).

It belongs to the NAPRTase family. Transiently phosphorylated on a His residue during the reaction cycle. Phosphorylation strongly increases the affinity for substrates and increases the rate of nicotinate D-ribonucleotide production. Dephosphorylation regenerates the low-affinity form of the enzyme, leading to product release.

It carries out the reaction nicotinate + 5-phospho-alpha-D-ribose 1-diphosphate + ATP + H2O = nicotinate beta-D-ribonucleotide + ADP + phosphate + diphosphate. Its pathway is cofactor biosynthesis; NAD(+) biosynthesis; nicotinate D-ribonucleotide from nicotinate: step 1/1. In terms of biological role, catalyzes the synthesis of beta-nicotinate D-ribonucleotide from nicotinate and 5-phospho-D-ribose 1-phosphate at the expense of ATP. The protein is Nicotinate phosphoribosyltransferase of Pseudomonas putida (strain ATCC 47054 / DSM 6125 / CFBP 8728 / NCIMB 11950 / KT2440).